The following is a 1401-amino-acid chain: Condensin complex subunit 1 (1401 aa).

An interactions with SMC2 and SMC4 region spans residues 1 to 603; the sequence is MAPQMYEFHL…TVCKNKPNMS (603 aa). Phosphoserine is present on residues S20 and S585. Residues 576 to 596 are compositionally biased toward polar residues; sequence STQEKNPRESTGNMVTGQTVC. Disordered regions lie at residues 576–611, 956–978, and 1303–1401; these read STQEKNPRESTGNMVTGQTVCKNKPNMSDPEESRGN, REEQEHKTKDPKEKNTSSETTME, and LEIG…RHRS. A compositionally biased stretch (basic and acidic residues) spans 956–971; sequence REEQEHKTKDPKEKNT. Residues 1308–1336 are compositionally biased toward polar residues; it reads AGSQRAPSAKKPSTGSRYQPLASTASDND. Residues S1310, S1315, and S1330 each carry the phosphoserine modification. At T1331 the chain carries Phosphothreonine. S1333 bears the Phosphoserine mark. T1339 carries the post-translational modification Phosphothreonine. Positions 1342–1362 match the Bipartite nuclear localization signal motif; that stretch reads PRRTTRRHPNTQQRASKKKPK. The segment covering 1345–1362 has biased composition (basic residues); it reads TTRRHPNTQQRASKKKPK. Phosphoserine occurs at positions 1366, 1367, 1370, 1371, and 1376. The span at 1369–1382 shows a compositional bias: acidic residues; that stretch reads ESSEEDLSAEMTED. A phosphothreonine; by CDK1 mark is found at T1384 and T1389. S1395 bears the Phosphoserine mark.

It belongs to the CND1 (condensin subunit 1) family. Component of the condensin complex, which contains the SMC2 and SMC4 heterodimer, and three non SMC subunits that probably regulate the complex: NCAPH/BRRN1, NCAPD2/CAPD2 and NCAPG. Interacts with histones H1 and H3. Post-translationally, phosphorylated by CDK1. Its phosphorylation, as well as that of NCAPH and NCAPG subunits, activates the condensin complex and is required for chromosome condensation.

The protein resides in the nucleus. The protein localises to the cytoplasm. Its subcellular location is the chromosome. Functionally, regulatory subunit of the condensin complex, a complex required for conversion of interphase chromatin into mitotic-like condense chromosomes. The condensin complex probably introduces positive supercoils into relaxed DNA in the presence of type I topoisomerases and converts nicked DNA into positive knotted forms in the presence of type II topoisomerases. May target the condensin complex to DNA via its C-terminal domain. May promote the resolution of double-strand DNA catenanes (intertwines) between sister chromatids. Condensin-mediated compaction likely increases tension in catenated sister chromatids, providing directionality for type II topoisomerase-mediated strand exchanges toward chromatid decatenation. Required for decatenation of non-centromeric ultrafine DNA bridges during anaphase. Early in neurogenesis, may play an essential role to ensure accurate mitotic chromosome condensation in neuron stem cells, ultimately affecting neuron pool and cortex size. The protein is Condensin complex subunit 1 of Homo sapiens (Human).